Here is a 365-residue protein sequence, read N- to C-terminus: MEIPSQEIHIMIDNTISRRKERKTNLADAEPIVLMSVLSSLHAGYFRISLSLCSQALLWKIMVHLHSELPSMAYYLLWYLALATQVSLCFLYAFKCIFLFDMVKEEFSHYIGVNYLYAPSISCLLLLQSAPMIEPHSVLYQTLFWIFAVPVLTLDTKLYGQWFTTEKRFLSIMANPASQVSVIANLVAARGAAEMGWKECALCLFSLGMVHYLVIFVTLYQRLPGGNNFPTTLRPVFFLFFAAPATASLAWNSICGNFDTIAKMLFFLSLFIFISLVCRPNLLKKSIKRFNVAWWAYSFPITFLALNSVQYAQEVKDHVASVLMFIFSSMSVLIFISVMLLTAANSKRLLRRDHVLWSSTGPKDK.

Topologically, residues 1-25 (MEIPSQEIHIMIDNTISRRKERKTN) are cytoplasmic. Residues 26–46 (LADAEPIVLMSVLSSLHAGYF) form a helical membrane-spanning segment. The Extracellular segment spans residues 47–73 (RISLSLCSQALLWKIMVHLHSELPSMA). Residues 74-94 (YYLLWYLALATQVSLCFLYAF) form a helical membrane-spanning segment. Over 95–106 (KCIFLFDMVKEE) the chain is Cytoplasmic. The helical transmembrane segment at 107-127 (FSHYIGVNYLYAPSISCLLLL) threads the bilayer. At 128-131 (QSAP) the chain is on the extracellular side. A helical transmembrane segment spans residues 132–152 (MIEPHSVLYQTLFWIFAVPVL). At 153-168 (TLDTKLYGQWFTTEKR) the chain is on the cytoplasmic side. The chain crosses the membrane as a helical span at residues 169–189 (FLSIMANPASQVSVIANLVAA). The Extracellular portion of the chain corresponds to 190–199 (RGAAEMGWKE). The helical transmembrane segment at 200 to 220 (CALCLFSLGMVHYLVIFVTLY) threads the bilayer. Residues 221 to 235 (QRLPGGNNFPTTLRP) are Cytoplasmic-facing. A helical transmembrane segment spans residues 236 to 256 (VFFLFFAAPATASLAWNSICG). Asn257 is a topological domain (extracellular). Residues 258–278 (FDTIAKMLFFLSLFIFISLVC) traverse the membrane as a helical segment. Over 279 to 291 (RPNLLKKSIKRFN) the chain is Cytoplasmic. The helical transmembrane segment at 292–312 (VAWWAYSFPITFLALNSVQYA) threads the bilayer. The Extracellular portion of the chain corresponds to 313–321 (QEVKDHVAS). Residues 322–342 (VLMFIFSSMSVLIFISVMLLT) traverse the membrane as a helical segment. The Cytoplasmic portion of the chain corresponds to 343–365 (AANSKRLLRRDHVLWSSTGPKDK).

The protein belongs to the SLAC1 S-type anion channel family. In terms of assembly, homotrimer.

The protein localises to the cell membrane. Functionally, slow, weak voltage-dependent S-type anion efflux channel involved in maintenance of anion homeostasis. The sequence is that of S-type anion channel SLAH4 (SLAH4) from Arabidopsis thaliana (Mouse-ear cress).